A 194-amino-acid chain; its full sequence is Flagellin A2 (194 aa).

The propeptide occupies 1-12; sequence MFEFITDEDERG.

The protein belongs to the archaeal flagellin family. Post-translationally, glycosylated.

Its subcellular location is the archaeal flagellum. Flagellin is the subunit protein which polymerizes to form the filaments of archaeal flagella. This chain is Flagellin A2 (flaA2), found in Halobacterium salinarum (strain ATCC 700922 / JCM 11081 / NRC-1) (Halobacterium halobium).